A 120-amino-acid chain; its full sequence is Small ribosomal subunit protein bS6 (120 aa).

Residues 97 to 112 (SNEPSPILKNQSTENT) show a composition bias toward polar residues. A disordered region spans residues 97–120 (SNEPSPILKNQSTENTPVIDVTAN).

The protein belongs to the bacterial ribosomal protein bS6 family.

Binds together with bS18 to 16S ribosomal RNA. This chain is Small ribosomal subunit protein bS6, found in Rickettsia bellii (strain OSU 85-389).